The sequence spans 469 residues: Neuraminidase (469 aa).

Residues 1-6 (MNPNQK) are Intravirion-facing. A helical transmembrane segment spans residues 7–29 (TITIGSVSLTIATVCFLMQIAIL). Residues 11 to 33 (GSVSLTIATVCFLMQIAILATTV) are involved in apical transport and lipid raft association. Residues 30–469 (ATTVTLHFKQ…DGANINFMPI (440 aa)) lie on the Virion surface side of the membrane. Positions 36-88 (HFKQHECDSPASNQVMPCEPIIIERNITEIVYLNNTTIEKEICPEVVEYRNWS) are hypervariable stalk region. Residues Asn-61, Asn-69, Asn-70, and Asn-86 are each glycosylated (N-linked (GlcNAc...) asparagine; by host). The head of neuraminidase stretch occupies residues 91–469 (QCQITGFAPF…DGANINFMPI (379 aa)). 8 disulfide bridges follow: Cys-92–Cys-417, Cys-124–Cys-129, Cys-183–Cys-230, Cys-232–Cys-237, Cys-278–Cys-291, Cys-280–Cys-289, Cys-318–Cys-337, and Cys-421–Cys-447. Arg-118 lines the substrate pocket. A glycan (N-linked (GlcNAc...) asparagine; by host) is linked at Asn-146. The active-site Proton donor/acceptor is the Asp-151. Arg-152 contacts substrate. Residues Asn-200 and Asn-234 are each glycosylated (N-linked (GlcNAc...) asparagine; by host). 276 to 277 (EE) serves as a coordination point for substrate. Residue Arg-292 coordinates substrate. Positions 293, 297, and 324 each coordinate Ca(2+). A disordered region spans residues 325 to 349 (TPRNDDSSSNSNCRDPNNERGNPGV). Arg-371 lines the substrate pocket. An N-linked (GlcNAc...) asparagine; by host glycan is attached at Asn-402. Tyr-406 (nucleophile) is an active-site residue.

Belongs to the glycosyl hydrolase 34 family. Homotetramer. It depends on Ca(2+) as a cofactor. In terms of processing, N-glycosylated.

Its subcellular location is the virion membrane. It localises to the host apical cell membrane. It carries out the reaction Hydrolysis of alpha-(2-&gt;3)-, alpha-(2-&gt;6)-, alpha-(2-&gt;8)- glycosidic linkages of terminal sialic acid residues in oligosaccharides, glycoproteins, glycolipids, colominic acid and synthetic substrates.. With respect to regulation, inhibited by the neuraminidase inhibitors zanamivir (Relenza) and oseltamivir (Tamiflu). These drugs interfere with the release of progeny virus from infected cells and are effective against all influenza strains. Resistance to neuraminidase inhibitors is quite rare. Catalyzes the removal of terminal sialic acid residues from viral and cellular glycoconjugates. Cleaves off the terminal sialic acids on the glycosylated HA during virus budding to facilitate virus release. Additionally helps virus spread through the circulation by further removing sialic acids from the cell surface. These cleavages prevent self-aggregation and ensure the efficient spread of the progeny virus from cell to cell. Otherwise, infection would be limited to one round of replication. Described as a receptor-destroying enzyme because it cleaves a terminal sialic acid from the cellular receptors. May facilitate viral invasion of the upper airways by cleaving the sialic acid moieties on the mucin of the airway epithelial cells. Likely to plays a role in the budding process through its association with lipid rafts during intracellular transport. May additionally display a raft-association independent effect on budding. Plays a role in the determination of host range restriction on replication and virulence. Sialidase activity in late endosome/lysosome traffic seems to enhance virus replication. The polypeptide is Neuraminidase (Influenza A virus (strain A/RI/5-/1957 H2N2)).